The following is a 558-amino-acid chain: Urocanate hydratase (558 aa).

NAD(+)-binding positions include 54–55, glutamine 132, 178–180, glutamate 198, 244–245, 265–269, 275–276, and tyrosine 324; these read GG, GMG, NA, QTSAH, and YL. Cysteine 412 is a catalytic residue. Glycine 494 serves as a coordination point for NAD(+).

The protein belongs to the urocanase family. It depends on NAD(+) as a cofactor.

Its subcellular location is the cytoplasm. It carries out the reaction 4-imidazolone-5-propanoate = trans-urocanate + H2O. Its pathway is amino-acid degradation; L-histidine degradation into L-glutamate; N-formimidoyl-L-glutamate from L-histidine: step 2/3. In terms of biological role, catalyzes the conversion of urocanate to 4-imidazolone-5-propionate. The chain is Urocanate hydratase from Acinetobacter baumannii (strain ACICU).